The chain runs to 589 residues: MGAQIILSEGFEVVPPPEMNDLVLFGSNQSVSSCDVSTVTTEDGTVFSGDSSPGGATEEDFPEEKPFSFYFVKQPAYDDPEIKAKIDEAGHEINRYNKDRIVVSNAQESEKAEILSLFGQMKSLVSKSEGYRVVIEEKKMEFDALHESLRNLRCSTSDQLCFSKEELDHLIYIAHYQIEHGSIGFEEEDWVLKETEKADGIVLSEDSLAEKEASINRVKSMAVELNEVKKELDAITWKINHLSDKVGKSQNNLRVLDVKKAHILEERDRSYERIKMLRIQRDKGKAAFYQSLPVMRKARELAASGNVRDLEVFASSEADRFMTQWNDDKAFRDDYVKRISPSLCERQLNQDGRIKDPEVQVVWEKKVPVKGGEKVHETNREDSSSNSSQYGSVITDKRKKETRKKAMDFNRSSAEESDVTDLEFSVYEKPKKEEEEVDEETLKEREREEQLEKARLAMERKRKLQEKAAAKAAIRAQKEAEKKLKECEKKAKKKAAANSSSPSESDHSQEVTKDLEKVRTLAVSGKEKHQKERSLFPKQRSFRYKHRGRGTEALPKAILNRRKAHKYWVWGLSSAALAVALFLVVLLLR.

Residues 205–245 are a coiled coil; the sequence is EDSLAEKEASINRVKSMAVELNEVKKELDAITWKINHLSDK. 4 stretches are compositionally biased toward basic and acidic residues: residues 370–383, 395–408, 426–450, and 504–534; these read KGGEKVHETNREDS, TDKRKKETRKKAMD, VYEKPKKEEEEVDEETLKEREREEQ, and ESDHSQEVTKDLEKVRTLAVSGKEKHQKERS. Disordered stretches follow at residues 370-450 and 485-534; these read KGGE…REEQ and KECE…KERS. Residues 431 to 500 are a coiled coil; the sequence is KKEEEEVDEE…AKKKAAANSS (70 aa). The chain crosses the membrane as a helical span at residues 568–588; it reads WVWGLSSAALAVALFLVVLLL.

This sequence belongs to the plant Proton pump-interactor protein family. In terms of tissue distribution, expressed in seedlings and flowers.

The protein resides in the cell membrane. Its subcellular location is the endoplasmic reticulum membrane. Its function is as follows. May regulate plasma membrane ATPase activity. The chain is Proton pump-interactor 2 (PPI2) from Arabidopsis thaliana (Mouse-ear cress).